A 286-amino-acid polypeptide reads, in one-letter code: Perivitellin-2 31 kDa subunit (286 aa).

An N-terminal signal peptide occupies residues 1–30; that stretch reads MVKKIHFVMERHASIVAFLLAVLALTESQA. A glycan (N-linked (GlcNAc...) asparagine) is linked at N101.

This sequence belongs to the tectonin family. In terms of assembly, perivitellin-2 is a dimer of heterodimers held together head-to-tail by non-covalent forces. The heterodimer is composed of the tachylectin subunit (31 kDa) and the MACPF subunit (67 kDa) that are disulfide-linked. Post-translationally, PV2 is a very high density lipoprotein (VHDL). It contains 3.75% of lipids. The major lipid classes are free sterols and phospholipids and also have significant quantities of energy-providing triacylglycerides and free fatty acids. Produced by albumen secretory cells. Found in developing eggs.

It is found in the secreted. The protein localises to the target cell membrane. Functionally, the egg defensive protein perivitellin-2 is a pore-forming two-subunit glycoprotein that affects both the nervous and digestive systems of mammals. In addition, it is a source of both structural and energetic molecules during embryonic development. The tachylectin subunit (31 kDa) binds target membranes while the MACPF subunit (67 kDa) disrupts lipid bilayers forming large pores (inner diameter of about 5.6 nm) altering the plasma membrance conductance. Both in vivo and in vitro, the protein shows wide pH range stability and is resistant to enzymatic proteolysis from gastrointestinal environments. It is cytotoxic to both epithelial and immune cells from the digestive system of mammals. It induces enterocyte death by a lytic mechanism and disrupts enterocyte monolayers in a dose-dependent manner. After oral administration to mice, it binds enterocytes and induces large dose-dependent morphological changes on their small intestine mucosa, reducing the absorptive surface. Additionally, it is detected in the Peyer's patches where it activates lymphoid follicles and triggers apoptosis. The toxin can also traverse the intestinal barrier and induce oral adaptive immunity with evidence of circulating antibody response. The toxin also shows hemagglutination properties thanks to the tachylectin subunit, but has no hemolytic activity. In addition to enterotoxin activity, the toxin also acts as a neurotoxin, since an intraperitoneal injection can induce paralysis of the mice rear limbs, followed by death. The sequence is that of Perivitellin-2 31 kDa subunit from Pomacea maculata (Giant applesnail).